The following is a 417-amino-acid chain: Gamma-glutamyl phosphate reductase (417 aa).

The protein belongs to the gamma-glutamyl phosphate reductase family.

The protein resides in the cytoplasm. The enzyme catalyses L-glutamate 5-semialdehyde + phosphate + NADP(+) = L-glutamyl 5-phosphate + NADPH + H(+). It participates in amino-acid biosynthesis; L-proline biosynthesis; L-glutamate 5-semialdehyde from L-glutamate: step 2/2. In terms of biological role, catalyzes the NADPH-dependent reduction of L-glutamate 5-phosphate into L-glutamate 5-semialdehyde and phosphate. The product spontaneously undergoes cyclization to form 1-pyrroline-5-carboxylate. This chain is Gamma-glutamyl phosphate reductase, found in Klebsiella pneumoniae (strain 342).